A 243-amino-acid chain; its full sequence is Exosome complex component Rrp41 (243 aa).

It belongs to the RNase PH family. Rrp41 subfamily. Component of the archaeal exosome complex. Forms a hexameric ring-like arrangement composed of 3 Rrp41-Rrp42 heterodimers. The hexameric ring associates with a trimer of Rrp4 and/or Csl4 subunits.

It is found in the cytoplasm. Functionally, catalytic component of the exosome, which is a complex involved in RNA degradation. Has 3'-&gt;5' exoribonuclease activity. Can also synthesize heteromeric RNA-tails. In Sulfolobus acidocaldarius (strain ATCC 33909 / DSM 639 / JCM 8929 / NBRC 15157 / NCIMB 11770), this protein is Exosome complex component Rrp41.